The chain runs to 366 residues: Tripartite motif-containing protein 54 (366 aa).

The segment at 26–82 (CPICLEMFSKPVVILPCQHNLCRKCANDVFQASNPLWQSRSSTTVSSGGRFRCPSCR) adopts an RING-type zinc-finger fold. The segment at 121–163 (EQHLMCEEHEDEKINIYCLSCEVPTCSLCKVFGAHKDCEVAPL) adopts a B box-type zinc-finger fold. Residues C126, H129, C149, and H155 each coordinate Zn(2+). The segment at 168–211 (KRQKSELSDGIAMLVAGNDRVQAVITQMEEVCQTIEENSRRQKQ) is mediates microtubule-binding and homooligomerization. A coiled-coil region spans residues 185-258 (NDRVQAVITQ…LIRQYGDHLE (74 aa)). One can recognise a COS domain in the interval 271-329 (MEEPQMALYLQQAKELINKVGTMSKVELAGRPEPGYERMDQFTVSVEHVAEMLRTIDFQ). The tract at residues 326–366 (IDFQPGTSGEEEDEEVAVEGEEGNAGPEEERTDGRESTGQH) is disordered. Over residues 334-347 (GEEEDEEVAVEGEE) the composition is skewed to acidic residues. Residues 353-366 (EEERTDGRESTGQH) are compositionally biased toward basic and acidic residues.

In terms of assembly, homooligomer and heterooligomer. Interacts with TRIM63 and probably with TRIM55. Interacts with tubulin.

The protein resides in the cytoplasm. It is found in the cytoskeleton. Its subcellular location is the myofibril. The protein localises to the sarcomere. It localises to the z line. In terms of biological role, may bind and stabilize microtubules during myotubes formation. The chain is Tripartite motif-containing protein 54 (TRIM54) from Bos taurus (Bovine).